The sequence spans 335 residues: Taste receptor type 2 member 119 (335 aa).

Residues 1 to 7 (MMEGHML) are Extracellular-facing. The chain crosses the membrane as a helical span at residues 8–28 (FFLLVVVVQFLTGVLANGLIV). Residues 29-43 (VVNAIDLIMWKKMAP) are Cytoplasmic-facing. Residues 44–64 (LDLLLFCLATSRIILQLCILF) form a helical membrane-spanning segment. The Extracellular segment spans residues 65-81 (AQLGLSCLVRHTLFADN). N-linked (GlcNAc...) asparagine glycosylation is present at N81. A helical transmembrane segment spans residues 82 to 102 (VTFVYIINELSLWFATWLGVF). Topologically, residues 103–124 (YCAKIATIPHPLFLWLKMRISR) are cytoplasmic. A helical transmembrane segment spans residues 125-145 (LVPWLILASVVYVTVTTFIHS). Residues 146–176 (RETSELPKQIFISFFSKNTTRVRPAHATLLS) lie on the Extracellular side of the membrane. Residue N163 is glycosylated (N-linked (GlcNAc...) asparagine). A helical membrane pass occupies residues 177–197 (VFVFGLTLPFLIFTVAVLLLL). The Cytoplasmic portion of the chain corresponds to 198 to 224 (SSLWNHSRQMRTMVGTREPSRHALVSA). The chain crosses the membrane as a helical span at residues 225-245 (MLSILSFLILYLSHDMVAVLI). Residues 246-256 (CTQGLHFGSRT) are Extracellular-facing. Residues 257–277 (FAFCLLVIGMYPSLHSIVLIL) traverse the membrane as a helical segment. Over 278–335 (GNPKLKRNAKTFIVHCKCCHCARAWVTSRNPRLSDLPVPATHHSANKTSCSEACIMPS) the chain is Cytoplasmic.

It belongs to the G-protein coupled receptor T2R family. As to expression, expressed in subsets of taste receptor cells of the tongue and palate epithelium and exclusively in gustducin-positive cells. Expressed in 15% taste bud cells in circumvallate and foliate papillae but only in 2% in fungiform papillae. Expressed in the gastro and duodenal tissue. Not expressed in colon, liver, heart and kidney.

It localises to the membrane. Gustducin-coupled receptor implicated in the perception of bitter compounds in the oral cavity and the gastrointestinal tract. Signals through PLCB2 and the calcium-regulated cation channel TRPM5. The polypeptide is Taste receptor type 2 member 119 (Tas2r119) (Mus musculus (Mouse)).